The chain runs to 883 residues: DNA mismatch repair protein MutS (883 aa).

633–640 (GPNMGGKS) contributes to the ATP binding site.

It belongs to the DNA mismatch repair MutS family.

In terms of biological role, this protein is involved in the repair of mismatches in DNA. It is possible that it carries out the mismatch recognition step. This protein has a weak ATPase activity. This Bordetella parapertussis (strain 12822 / ATCC BAA-587 / NCTC 13253) protein is DNA mismatch repair protein MutS.